The following is a 57-amino-acid chain: Large ribosomal subunit protein bL32 (57 aa).

Belongs to the bacterial ribosomal protein bL32 family.

The sequence is that of Large ribosomal subunit protein bL32 from Bacillus anthracis (strain A0248).